The chain runs to 93 residues: ATP synthase subunit c (93 aa).

2 helical membrane passes run 13-33 (AIGV…GMGI) and 58-78 (ISLA…FILL).

This sequence belongs to the ATPase C chain family. In terms of assembly, F-type ATPases have 2 components, F(1) - the catalytic core - and F(0) - the membrane proton channel. F(1) has five subunits: alpha(3), beta(3), gamma(1), delta(1), epsilon(1). F(0) has three main subunits: a(1), b(2) and c(10-14). The alpha and beta chains form an alternating ring which encloses part of the gamma chain. F(1) is attached to F(0) by a central stalk formed by the gamma and epsilon chains, while a peripheral stalk is formed by the delta and b chains.

Its subcellular location is the cell inner membrane. In terms of biological role, f(1)F(0) ATP synthase produces ATP from ADP in the presence of a proton or sodium gradient. F-type ATPases consist of two structural domains, F(1) containing the extramembraneous catalytic core and F(0) containing the membrane proton channel, linked together by a central stalk and a peripheral stalk. During catalysis, ATP synthesis in the catalytic domain of F(1) is coupled via a rotary mechanism of the central stalk subunits to proton translocation. Key component of the F(0) channel; it plays a direct role in translocation across the membrane. A homomeric c-ring of between 10-14 subunits forms the central stalk rotor element with the F(1) delta and epsilon subunits. The protein is ATP synthase subunit c of Campylobacter hominis (strain ATCC BAA-381 / DSM 21671 / CCUG 45161 / LMG 19568 / NCTC 13146 / CH001A).